Here is a 94-residue protein sequence, read N- to C-terminus: Large ribosomal subunit protein bL25 (94 aa).

This sequence belongs to the bacterial ribosomal protein bL25 family. As to quaternary structure, part of the 50S ribosomal subunit; part of the 5S rRNA/L5/L18/L25 subcomplex. Contacts the 5S rRNA. Binds to the 5S rRNA independently of L5 and L18.

Its function is as follows. This is one of the proteins that binds to the 5S RNA in the ribosome where it forms part of the central protuberance. In Yersinia pestis bv. Antiqua (strain Antiqua), this protein is Large ribosomal subunit protein bL25.